Consider the following 328-residue polypeptide: tRNA uridine(34) hydroxylase (328 aa).

Residues 130–224 (LDEDTVVLDT…YGKDPEVQGE (95 aa)) form the Rhodanese domain. Cys-184 functions as the Cysteine persulfide intermediate in the catalytic mechanism.

This sequence belongs to the TrhO family.

It carries out the reaction uridine(34) in tRNA + AH2 + O2 = 5-hydroxyuridine(34) in tRNA + A + H2O. Its function is as follows. Catalyzes oxygen-dependent 5-hydroxyuridine (ho5U) modification at position 34 in tRNAs. The protein is tRNA uridine(34) hydroxylase of Streptococcus pyogenes serotype M12 (strain MGAS2096).